We begin with the raw amino-acid sequence, 1043 residues long: Ack-related non-receptor tyrosine kinase (1043 aa).

The region spanning 113–379 is the Protein kinase domain; it reads ITLCKELGQG…SDIVAKFPER (267 aa). ATP contacts are provided by residues 119-127 and K146; that span reads LGQGEFGSV. The active-site Proton acceptor is the D241. The region spanning 379–444 is the SH3 domain; it reads RRAQSVRAVV…RPTDTVAHLG (66 aa). The disordered stretch occupies residues 443–481; sequence LGSEPPCSNGTIENGFSEKEKGGKKNKKAEKESERERKK. The span at 458–481 shows a compositional bias: basic and acidic residues; sequence FSEKEKGGKKNKKAEKESERERKK. Residues 484–498 form the CRIB domain; that stretch reads ISEPVGDVRHTCHVG. Disordered stretches follow at residues 514 to 644, 790 to 842, 859 to 898, and 932 to 993; these read MCPT…SAAN, KINE…GWSS, KQAS…LSVR, and LIDG…RQFP. Low complexity predominate over residues 516–543; it reads PTSSSPSTSRGSQASPAPSHTSSSTTSS. Positions 610–624 are enriched in polar residues; the sequence is GNQHSVQVHDQFSSL. The span at 630–644 shows a compositional bias: low complexity; it reads SLTPTAPPLTASAAN. The stretch at 785-812 forms a coiled coil; sequence EQEVRKINEKSAREHRKTEDLLREERQK. Over residues 790–818 the composition is skewed to basic and acidic residues; it reads KINEKSAREHRKTEDLLREERQKEQKPGE. Positions 825–842 are enriched in polar residues; it reads PAESLYSTRTPQQEGWSS. The segment covering 870–884 has biased composition (low complexity); the sequence is PTSSRLSTLDRSSIS.

This sequence belongs to the protein kinase superfamily. Tyr protein kinase family. Mg(2+) serves as cofactor.

The enzyme catalyses L-tyrosyl-[protein] + ATP = O-phospho-L-tyrosyl-[protein] + ADP + H(+). It catalyses the reaction L-seryl-[protein] + ATP = O-phospho-L-seryl-[protein] + ADP + H(+). The catalysed reaction is L-threonyl-[protein] + ATP = O-phospho-L-threonyl-[protein] + ADP + H(+). Its function is as follows. Probable tyrosine protein kinase which plays a role in vulva development, probably by acting as a negative regulator of the let-23/EGFR and let-60/ras pathway. Involved in the negative regulation of germline development. The sequence is that of Ack-related non-receptor tyrosine kinase from Caenorhabditis elegans.